Here is an 82-residue protein sequence, read N- to C-terminus: Small ribosomal subunit protein bS16 (82 aa).

This sequence belongs to the bacterial ribosomal protein bS16 family.

This is Small ribosomal subunit protein bS16 from Marinomonas sp. (strain MWYL1).